The following is a 484-amino-acid chain: GRIP domain-containing protein RUD3 (484 aa).

Residues 1 to 15 are compositionally biased toward basic residues; it reads MGKNKKKTGKKAKSH. The segment at 1–75 is disordered; it reads MGKNKKKTGK…GVDKQKVNDG (75 aa). Over residues 16 to 30 the composition is skewed to basic and acidic residues; that stretch reads PHVEDVDETVNKPEE. A phosphoserine mark is found at Ser-55 and Ser-64. The segment covering 61-72 has biased composition (basic and acidic residues); that stretch reads KDLSEGVDKQKV. The stretch at 84–383 forms a coiled coil; sequence LEDKKAGDEM…LQIGKLRHEA (300 aa). The GRIP domain occupies 401–452; it reads SDSESVDKELISNLLISFVSIPRADPRKFEVLELLSNFLNWDEDKKQQAGLI. Residue Ser-468 is modified to Phosphoserine.

Its subcellular location is the golgi apparatus lumen. Involved in the structural organization of the cis-Golgi and in vesicle targeting/fusion stages of ER to Golgi transport. The chain is GRIP domain-containing protein RUD3 (RUD3) from Saccharomyces cerevisiae (strain ATCC 204508 / S288c) (Baker's yeast).